The following is a 95-amino-acid chain: Large ribosomal subunit protein uL23 (95 aa).

This sequence belongs to the universal ribosomal protein uL23 family. In terms of assembly, part of the 50S ribosomal subunit. Contacts protein L29, and trigger factor when it is bound to the ribosome.

One of the early assembly proteins it binds 23S rRNA. One of the proteins that surrounds the polypeptide exit tunnel on the outside of the ribosome. Forms the main docking site for trigger factor binding to the ribosome. This Heliobacterium modesticaldum (strain ATCC 51547 / Ice1) protein is Large ribosomal subunit protein uL23.